The following is a 396-amino-acid chain: Ribosomal RNA large subunit methyltransferase I (396 aa).

In terms of domain architecture, PUA spans 2-79; sequence AIRIKLKPGR…REEEIDREFF (78 aa).

The protein belongs to the methyltransferase superfamily. RlmI family.

It is found in the cytoplasm. The enzyme catalyses cytidine(1962) in 23S rRNA + S-adenosyl-L-methionine = 5-methylcytidine(1962) in 23S rRNA + S-adenosyl-L-homocysteine + H(+). In terms of biological role, specifically methylates the cytosine at position 1962 (m5C1962) of 23S rRNA. The sequence is that of Ribosomal RNA large subunit methyltransferase I from Shewanella baltica (strain OS155 / ATCC BAA-1091).